The primary structure comprises 238 residues: Probable transcriptional regulatory protein VS_II1504 (238 aa).

It belongs to the TACO1 family.

It is found in the cytoplasm. This Vibrio atlanticus (strain LGP32) (Vibrio splendidus (strain Mel32)) protein is Probable transcriptional regulatory protein VS_II1504.